Consider the following 264-residue polypeptide: Propanediol uptake facilitator PduF (264 aa).

Transmembrane regions (helical) follow at residues 10 to 30 (GAEF…LSAL) and 42 to 62 (ICII…GISG). An NPA 1 motif is present at residues 66 to 68 (NPA). Helical transmembrane passes span 84–104 (VLPY…LAYV), 143–163 (VWQA…MIMA), and 179–199 (LLIG…TGFA). Positions 201 to 203 (NPA) match the NPA 2 motif. A helical transmembrane segment spans residues 228–248 (IPYFIVPIVAPVIGACAGAAI).

It belongs to the MIP/aquaporin (TC 1.A.8) family.

It localises to the cell inner membrane. Probably facilitates diffusion of 1,2-propanediol (1,2-PD) into the cell. Modeling suggests active transport of 1,2-PD is required at low extracellular concentrations to allow maximal growth and saturation of PduP/PduQ within the bacterial microcompartment (BMC); this protein may be the cellular transporter. Its function is as follows. The 1,2-PD-specific bacterial microcompartment (BMC) concentrates low levels of 1,2-PD catabolic enzymes, concentrates volatile reaction intermediates thus enhancing pathway flux and keeps the level of toxic, mutagenic propionaldehyde low. The protein is Propanediol uptake facilitator PduF of Salmonella typhimurium (strain LT2 / SGSC1412 / ATCC 700720).